The following is a 207-amino-acid chain: Ras-related protein Rab-7a (207 aa).

An N-acetylthreonine modification is found at Thr-2. Residues Ser-17, Gly-18, Val-19, Gly-20, Lys-21, Thr-22, Ser-23, Ser-34, Asn-35, Tyr-37, and Thr-40 each contribute to the GTP site. Thr-22 is a binding site for Mg(2+). The Switch 1 motif lies at 28–41 (YVNKKFSNQYKATI). Mg(2+) is bound by residues Thr-40 and Asp-63. Gly-66 lines the GTP pocket. A Switch 2 motif is present at residues 67–82 (QERFQSLGVAFYRGAD). The residue at position 72 (Ser-72) is a Phosphoserine. 5 residues coordinate GTP: Asn-125, Lys-126, Asp-128, Ala-156, and Lys-157. Glycyl lysine isopeptide (Lys-Gly) (interchain with G-Cter in ubiquitin) cross-links involve residues Lys-191 and Lys-194. S-geranylgeranyl cysteine attachment occurs at residues Cys-205 and Cys-207. At Cys-207 the chain carries Cysteine methyl ester.

The protein belongs to the small GTPase superfamily. Rab family. As to quaternary structure, interacts with NTRK1/TRKA. Interacts with RILP. Interacts with PSMA7. Interacts with RNF115. Interacts with FYCO1. Interacts with the PIK3C3/VPS34-PIK3R4 complex. The GTP-bound form interacts with OSBPL1A. The GTP-bound form interacts with RAC1. Interacts with CLN3. Interacts with CHM, the substrate-binding subunit of the Rab geranylgeranyltransferase complex. Interacts with C9orf72. Does not interact with HPS4 and the BLOC-3 complex (heterodimer of HPS1 and HPS4). Interacts with CLN5. Interacts with PLEKHM1 (via N- and C-terminus). Interacts with PRPH; the interaction is direct. Interacts with VPS13A. The GDP-bound form interacts with RIMOC1. Interacts with the MON1A-CCZ1B complex and this interaction is enhanced in the presence of RIMOC1. Interacts with VPS39 and VPS41. Forms a ternary complex with LAMP2 and RUFY4; the interaction with LAMP2 is mediated by RUFY4 (via RUN and coiled coil domains). The cofactor is Mg(2+). In terms of processing, deubiquitination at Lys-191 and Lys-194 by USP32. Post-translationally, phosphorylated at Ser-72 by LRRK1; phosphorylation is dependent on protein kinase C (PKC) activation of LRRK1. Prenylated. Prenylation is required for association with cellular membranes.

The protein resides in the cytoplasmic vesicle. Its subcellular location is the phagosome membrane. It is found in the late endosome membrane. The protein localises to the lysosome membrane. It localises to the melanosome membrane. The protein resides in the autophagosome membrane. Its subcellular location is the lipid droplet. It is found in the endosome membrane. The protein localises to the mitochondrion membrane. It carries out the reaction GTP + H2O = GDP + phosphate + H(+). Its activity is regulated as follows. Regulated by guanine nucleotide exchange factors (GEFs) which promote the exchange of bound GDP for free GTP. Regulated by GTPase activating proteins (GAPs) which increase the GTP hydrolysis activity. Inhibited by GDP dissociation inhibitors (GDIs). Functionally, the small GTPases Rab are key regulators of intracellular membrane trafficking, from the formation of transport vesicles to their fusion with membranes. Rabs cycle between an inactive GDP-bound form and an active GTP-bound form that is able to recruit to membranes different sets of downstream effectors directly responsible for vesicle formation, movement, tethering and fusion. In its active state, RAB7A binds to a variety of effector proteins playing a key role in the regulation of endo-lysosomal trafficking. Governs early-to-late endosomal maturation, microtubule minus-end as well as plus-end directed endosomal migration and positioning, and endosome-lysosome transport through different protein-protein interaction cascades. Also plays a central role in growth-factor-mediated cell signaling, nutrient-transporter-mediated nutrient uptake, neurotrophin transport in the axons of neurons and lipid metabolism. Also involved in regulation of some specialized endosomal membrane trafficking, such as maturation of melanosomes, pathogen-induced phagosomes (or vacuoles) and autophagosomes. Plays a role in the maturation and acidification of phagosomes that engulf pathogens, such as S.aureus and Mycobacteria. Plays a role in the fusion of phagosomes with lysosomes. In concert with RAC1, plays a role in regulating the formation of RBs (ruffled borders) in osteoclasts. Controls the endosomal trafficking and neurite outgrowth signaling of NTRK1/TRKA. Regulates the endocytic trafficking of the EGF-EGFR complex by regulating its lysosomal degradation. Involved in the ADRB2-stimulated lipolysis through lipophagy, a cytosolic lipase-independent autophagic pathway. Required for the exosomal release of SDCBP, CD63 and syndecan. Required for vesicular trafficking and cell surface expression of ACE2. May play a role in PRPH neuronal intermediate filament assembly. This is Ras-related protein Rab-7a (RAB7A) from Bos taurus (Bovine).